We begin with the raw amino-acid sequence, 1444 residues long: Cleavage and polyadenylation specificity factor subunit 1 (1444 aa).

Disordered stretches follow at residues 406-439 (PPAS…SKSV), 549-571 (EETL…DDGR), 716-778 (GGVR…PAPF), and 902-924 (FREK…EGTG). Residues 413 to 422 (EAADKEEPPS) show a composition bias toward basic and acidic residues. A phosphoserine mark is found at Ser-757 and Ser-767. Residues 759 to 776 (SKEEARRSSQPPADRDPA) show a composition bias toward basic and acidic residues. Residues 894 to 909 (KKVPHNINFREKKPKP) carry the Nuclear localization signal motif.

This sequence belongs to the CPSF1 family. As to quaternary structure, component of the cleavage and polyadenylation specificity factor (CPSF) complex, composed of CPSF1, CPSF2, CPSF3, CPSF4 and FIP1L1. Found in a complex with CPSF1, FIP1L1 and PAPOLA. Interacts with FIP1L1, TENT2/GLD2 and SRRM1. Interacts with TUT1; the interaction is direct and mediates the recruitment of the CPSF complex on the 3'UTR of selected pre-mRNAs. The N-terminus is blocked.

It localises to the nucleus. Its subcellular location is the nucleoplasm. Functionally, component of the cleavage and polyadenylation specificity factor (CPSF) complex that plays a key role in pre-mRNA 3'-end formation, recognizing the AAUAAA signal sequence and interacting with poly(A) polymerase and other factors to bring about cleavage and poly(A) addition. This subunit is involved in the RNA recognition step of the polyadenylation reaction. May play a role in eye morphogenesis and the development of retinal ganglion cell projections to the midbrain. This is Cleavage and polyadenylation specificity factor subunit 1 (CPSF1) from Bos taurus (Bovine).